Here is a 64-residue protein sequence, read N- to C-terminus: DNA-binding protein 7d (64 aa).

N6-methyllysine occurs at positions 5, 7, 61, 63, and 64.

The protein belongs to the 7 kDa DNA-binding/endoribonuclease P2 family. Monomer.

It is found in the cytoplasm. Its function is as follows. Can constrain negative DNA supercoils. May be involved in maintaining the integrity of the genome at high temperature. Stimulates the Holliday junction cleavage activity of Hjc. The chain is DNA-binding protein 7d (sso7d) from Saccharolobus solfataricus (strain ATCC 35092 / DSM 1617 / JCM 11322 / P2) (Sulfolobus solfataricus).